A 440-amino-acid chain; its full sequence is Histidinol dehydrogenase (440 aa).

Positions 134, 196, and 219 each coordinate NAD(+). Substrate contacts are provided by serine 242, glutamine 264, and histidine 267. Residues glutamine 264 and histidine 267 each contribute to the Zn(2+) site. Residues glutamate 332 and histidine 333 each act as proton acceptor in the active site. Substrate is bound by residues histidine 333, aspartate 366, glutamate 420, and histidine 425. Aspartate 366 is a Zn(2+) binding site. Histidine 425 contacts Zn(2+).

It belongs to the histidinol dehydrogenase family. Zn(2+) is required as a cofactor.

The enzyme catalyses L-histidinol + 2 NAD(+) + H2O = L-histidine + 2 NADH + 3 H(+). It participates in amino-acid biosynthesis; L-histidine biosynthesis; L-histidine from 5-phospho-alpha-D-ribose 1-diphosphate: step 9/9. Functionally, catalyzes the sequential NAD-dependent oxidations of L-histidinol to L-histidinaldehyde and then to L-histidine. The protein is Histidinol dehydrogenase of Prochlorococcus marinus (strain SARG / CCMP1375 / SS120).